A 275-amino-acid chain; its full sequence is Formamidopyrimidine-DNA glycosylase (275 aa).

The active-site Schiff-base intermediate with DNA is proline 2. Glutamate 3 (proton donor) is an active-site residue. Lysine 59 acts as the Proton donor; for beta-elimination activity in catalysis. 3 residues coordinate DNA: histidine 92, arginine 111, and lysine 155. Residues 240 to 274 (YVYGQTGEPCRRCGHEIEKMKLGGRGTHYCPHCQQ) form an FPG-type zinc finger. Arginine 264 acts as the Proton donor; for delta-elimination activity in catalysis.

This sequence belongs to the FPG family. As to quaternary structure, monomer. Requires Zn(2+) as cofactor.

The catalysed reaction is Hydrolysis of DNA containing ring-opened 7-methylguanine residues, releasing 2,6-diamino-4-hydroxy-5-(N-methyl)formamidopyrimidine.. It catalyses the reaction 2'-deoxyribonucleotide-(2'-deoxyribose 5'-phosphate)-2'-deoxyribonucleotide-DNA = a 3'-end 2'-deoxyribonucleotide-(2,3-dehydro-2,3-deoxyribose 5'-phosphate)-DNA + a 5'-end 5'-phospho-2'-deoxyribonucleoside-DNA + H(+). Its function is as follows. Involved in base excision repair of DNA damaged by oxidation or by mutagenic agents. Acts as a DNA glycosylase that recognizes and removes damaged bases. Has a preference for oxidized purines, such as 7,8-dihydro-8-oxoguanine (8-oxoG). Has AP (apurinic/apyrimidinic) lyase activity and introduces nicks in the DNA strand. Cleaves the DNA backbone by beta-delta elimination to generate a single-strand break at the site of the removed base with both 3'- and 5'-phosphates. This is Formamidopyrimidine-DNA glycosylase from Exiguobacterium sp. (strain ATCC BAA-1283 / AT1b).